A 376-amino-acid polypeptide reads, in one-letter code: 23S rRNA (uracil(747)-C(5))-methyltransferase RlmC (376 aa).

Residues cysteine 3, cysteine 11, cysteine 14, and cysteine 87 each contribute to the [4Fe-4S] cluster site. Residues glutamine 212, phenylalanine 241, glutamate 262, and asparagine 307 each contribute to the S-adenosyl-L-methionine site. The Nucleophile role is filled by cysteine 334.

It belongs to the class I-like SAM-binding methyltransferase superfamily. RNA M5U methyltransferase family. RlmC subfamily.

It carries out the reaction uridine(747) in 23S rRNA + S-adenosyl-L-methionine = 5-methyluridine(747) in 23S rRNA + S-adenosyl-L-homocysteine + H(+). Functionally, catalyzes the formation of 5-methyl-uridine at position 747 (m5U747) in 23S rRNA. In Salmonella choleraesuis (strain SC-B67), this protein is 23S rRNA (uracil(747)-C(5))-methyltransferase RlmC.